The primary structure comprises 123 residues: Large ribosomal subunit protein bL12 (123 aa).

The protein belongs to the bacterial ribosomal protein bL12 family. Homodimer. Part of the ribosomal stalk of the 50S ribosomal subunit. Forms a multimeric L10(L12)X complex, where L10 forms an elongated spine to which 2 to 4 L12 dimers bind in a sequential fashion. Binds GTP-bound translation factors.

Its function is as follows. Forms part of the ribosomal stalk which helps the ribosome interact with GTP-bound translation factors. Is thus essential for accurate translation. The protein is Large ribosomal subunit protein bL12 of Cytophaga hutchinsonii (strain ATCC 33406 / DSM 1761 / CIP 103989 / NBRC 15051 / NCIMB 9469 / D465).